We begin with the raw amino-acid sequence, 256 residues long: 5-keto-4-deoxy-D-glucarate aldolase (256 aa).

Catalysis depends on His50, which acts as the Proton acceptor. Gln151 provides a ligand contact to substrate. Glu153 serves as a coordination point for Mg(2+). Substrate-binding residues include Ser178 and Asp179. Asp179 is a Mg(2+) binding site.

Belongs to the HpcH/HpaI aldolase family. KDGluc aldolase subfamily. As to quaternary structure, homohexamer; trimer of dimers. The cofactor is Mg(2+).

The enzyme catalyses 5-dehydro-4-deoxy-D-glucarate = 2-hydroxy-3-oxopropanoate + pyruvate. The catalysed reaction is 2-dehydro-3-deoxy-D-glucarate = 2-hydroxy-3-oxopropanoate + pyruvate. It functions in the pathway carbohydrate acid metabolism; galactarate degradation; D-glycerate from galactarate: step 2/3. Its function is as follows. Catalyzes the reversible retro-aldol cleavage of both 5-keto-4-deoxy-D-glucarate and 2-keto-3-deoxy-D-glucarate to pyruvate and tartronic semialdehyde. The polypeptide is 5-keto-4-deoxy-D-glucarate aldolase (Escherichia coli (strain ATCC 8739 / DSM 1576 / NBRC 3972 / NCIMB 8545 / WDCM 00012 / Crooks)).